The primary structure comprises 707 residues: Leukotoxin export ATP-binding protein LtxB (707 aa).

The Peptidase C39 domain occupies 4–125 (QKNTNLALQA…ERYQSKVILI (122 aa)). His83 is an active-site residue. Transmembrane regions (helical) follow at residues 158–178 (LIVS…FQVV), 191–211 (LNVI…LGGL), 269–289 (ALTS…MWYY), 295–315 (LVVL…SPIL), and 387–407 (AVMV…DLSI). In terms of domain architecture, ABC transmembrane type-1 spans 158 to 436 (LIVSIFLQIF…LAQIWQDFQQ (279 aa)). An ABC transporter domain is found at 468–703 (ISFRNIKFRY…EKGLYSYLHQ (236 aa)). 502–509 (GRSGSGKS) is a binding site for ATP.

This sequence belongs to the ABC transporter superfamily. Protein-1 exporter (TC 3.A.1.109) family. In terms of assembly, probably part of a complex composed of LtxB, LtxD and TdeA, which forms a single transport channel across the two membranes.

The protein localises to the cell inner membrane. The catalysed reaction is ATP + H2O + proteinSide 1 = ADP + phosphate + proteinSide 2.. Functionally, involved in the export of the LtxA leukotoxin. The protein is Leukotoxin export ATP-binding protein LtxB of Aggregatibacter actinomycetemcomitans (Actinobacillus actinomycetemcomitans).